Reading from the N-terminus, the 211-residue chain is Uracil phosphoribosyltransferase (211 aa).

5-phospho-alpha-D-ribose 1-diphosphate-binding positions include R78, R103, and 130-138; that span reads DPMLATGGT. Residues I195 and 200-202 each bind uracil; that span reads GDA. D201 provides a ligand contact to 5-phospho-alpha-D-ribose 1-diphosphate.

It belongs to the UPRTase family. It depends on Mg(2+) as a cofactor.

It carries out the reaction UMP + diphosphate = 5-phospho-alpha-D-ribose 1-diphosphate + uracil. The protein operates within pyrimidine metabolism; UMP biosynthesis via salvage pathway; UMP from uracil: step 1/1. With respect to regulation, allosterically activated by GTP. Its function is as follows. Catalyzes the conversion of uracil and 5-phospho-alpha-D-ribose 1-diphosphate (PRPP) to UMP and diphosphate. In Streptomyces avermitilis (strain ATCC 31267 / DSM 46492 / JCM 5070 / NBRC 14893 / NCIMB 12804 / NRRL 8165 / MA-4680), this protein is Uracil phosphoribosyltransferase.